Reading from the N-terminus, the 518-residue chain is Beta-secretase 2 (518 aa).

Positions 1 to 20 (MGALARALLLPLLAQWLLRA) are cleaved as a signal peptide. Residues 21-62 (APELAPAPFTLPLRVAAATNRVVAPTPGPGTPAERHADGLAL) constitute a propeptide that is removed on maturation. The Extracellular segment spans residues 21–473 (APELAPAPFT…SEPILWIVSY (453 aa)). Positions 92-429 (YYLEMLIGTP…DRAQKRVGFA (338 aa)) constitute a Peptidase A1 domain. Asp-110 is a catalytic residue. An N-linked (GlcNAc...) asparagine glycan is attached at Asn-170. 3 cysteine pairs are disulfide-bonded: Cys-233/Cys-433, Cys-292/Cys-457, and Cys-344/Cys-393. The active site involves Asp-303. Asn-366 carries N-linked (GlcNAc...) asparagine glycosylation. Residues 474–494 (ALMSVCGAILLVLIVLLLLPF) traverse the membrane as a helical segment. Residues 495 to 518 (RCQRRPRDPEVVNDESSLVRHRWK) lie on the Cytoplasmic side of the membrane.

This sequence belongs to the peptidase A1 family. In terms of assembly, monomer. Interacts with RTN3 and RTN4. Post-translationally, undergoes autoproteolytic cleavage. Glycosylated. As to expression, brain. Present in neurons within the hippocampus, frontal cortex and temporal cortex (at protein level). Expressed at low levels in most peripheral tissues and at higher levels in colon, kidney, pancreas, placenta, prostate, stomach and trachea. Expressed at low levels in the brain. Found in spinal cord, medulla oblongata, substantia nigra and locus coruleus. Expressed in the ductal epithelium of both normal and malignant prostate.

The protein resides in the cell membrane. It is found in the golgi apparatus. It localises to the endoplasmic reticulum. Its subcellular location is the endosome. The protein localises to the melanosome. It catalyses the reaction Broad endopeptidase specificity. Cleaves Glu-Val-Asn-Leu-|-Asp-Ala-Glu-Phe in the Swedish variant of Alzheimer's amyloid precursor protein.. Its function is as follows. Responsible for the proteolytic processing of the amyloid precursor protein (APP). Cleaves APP, between residues 690 and 691, leading to the generation and extracellular release of beta-cleaved soluble APP, and a corresponding cell-associated C-terminal fragment which is later released by gamma-secretase. It has also been shown that it can cleave APP between residues 671 and 672. Involved in the proteolytic shedding of PMEL at early stages of melanosome biogenesis. Cleaves PMEL within the M-beta fragment to release the amyloidogenic PMEL luminal fragment containing M-alpha and a small portion of M-beta N-terminus. This is a prerequisite step for subsequent processing and assembly of PMEL fibrils into amyloid sheets. Responsible also for the proteolytic processing of CLTRN in pancreatic beta cells. In Homo sapiens (Human), this protein is Beta-secretase 2 (BACE2).